A 189-amino-acid chain; its full sequence is UPF0312 protein VV2_0231 (189 aa).

Residues 1–22 (MRKSVIATGLALMMAVPFAANA) form the signal peptide.

It belongs to the UPF0312 family. Type 1 subfamily.

Its subcellular location is the periplasm. The chain is UPF0312 protein VV2_0231 from Vibrio vulnificus (strain CMCP6).